Consider the following 223-residue polypeptide: Phosphoribosylformylglycinamidine synthase subunit PurQ (223 aa).

Residues K4 to A223 form the Glutamine amidotransferase type-1 domain. C87 (nucleophile) is an active-site residue. Catalysis depends on residues H195 and E197.

In terms of assembly, part of the FGAM synthase complex composed of 1 PurL, 1 PurQ and 2 PurS subunits.

The protein resides in the cytoplasm. The enzyme catalyses N(2)-formyl-N(1)-(5-phospho-beta-D-ribosyl)glycinamide + L-glutamine + ATP + H2O = 2-formamido-N(1)-(5-O-phospho-beta-D-ribosyl)acetamidine + L-glutamate + ADP + phosphate + H(+). It carries out the reaction L-glutamine + H2O = L-glutamate + NH4(+). It functions in the pathway purine metabolism; IMP biosynthesis via de novo pathway; 5-amino-1-(5-phospho-D-ribosyl)imidazole from N(2)-formyl-N(1)-(5-phospho-D-ribosyl)glycinamide: step 1/2. Part of the phosphoribosylformylglycinamidine synthase complex involved in the purines biosynthetic pathway. Catalyzes the ATP-dependent conversion of formylglycinamide ribonucleotide (FGAR) and glutamine to yield formylglycinamidine ribonucleotide (FGAM) and glutamate. The FGAM synthase complex is composed of three subunits. PurQ produces an ammonia molecule by converting glutamine to glutamate. PurL transfers the ammonia molecule to FGAR to form FGAM in an ATP-dependent manner. PurS interacts with PurQ and PurL and is thought to assist in the transfer of the ammonia molecule from PurQ to PurL. The polypeptide is Phosphoribosylformylglycinamidine synthase subunit PurQ (Corynebacterium efficiens (strain DSM 44549 / YS-314 / AJ 12310 / JCM 11189 / NBRC 100395)).